The primary structure comprises 1331 residues: Disease resistance protein RUN1 (1331 aa).

A disordered region spans residues 1-20; the sequence is MASTSSSRASSSSSSSSTPS. The 166-residue stretch at 25–190 folds into the TIR domain; the sequence is ITYDVFLSFR…EITDSIFRRL (166 aa). NAD(+)-binding positions include 34-39 and Gly66; that span reads RGEDTR. Glu100 is an active-site residue. In terms of domain architecture, NB-ARC spans 206-434; that stretch reads SHVKEMIWRL…REPEAEILSV (229 aa). 20 LRR repeats span residues 429–452, 480–509, 540–565, 616–638, 648–673, 684–708, 709–732, 734–756, 757–779, 781–803, 804–826, 828–850, 851–873, 875–897, 898–920, 922–944, 945–967, 969–991, 992–1014, and 1017–1040; these read AEIL…IFLD, IKNL…GWEI, IKRV…AFAK, SYEL…NFDG, CSNI…SYSR, MPNL…VGNM, KKLT…IGDL, SLEI…GGNM, KSLT…IGDL, SLKY…GGNM, KSLR…IRDL, SLER…GGNM, KSLM…IGDL, SLVS…GGNM, KSLN…IGDL, SLMR…VGNM, KSLE…IGDL, and LEKL…AIDA. The Nuclear localization signal signature appears at 1287–1291; the sequence is RKRRR.

Belongs to the disease resistance TIR-NB-LRR family.

Its subcellular location is the nucleus. It localises to the cytoplasm. The catalysed reaction is NAD(+) + H2O = ADP-D-ribose + nicotinamide + H(+). It carries out the reaction NADP(+) + H2O = ADP-D-ribose 2'-phosphate + nicotinamide + H(+). Disease resistance (R) protein that confers resistance to multiple powdery and downy mildew by promoting cell death. Acts as a NAD(+) hydrolase (NADase): in response to activation, catalyzes cleavage of NAD(+) into ADP-D-ribose (ADPR) and nicotinamide; NAD(+) cleavage triggering a defense system that promotes cell death. Also able to hydrolyze NADP(+), but not other NAD(+)-related molecules. This chain is Disease resistance protein RUN1, found in Vitis rotundifolia (Muscadine grape).